Here is a 228-residue protein sequence, read N- to C-terminus: MQLCSWNLRGSEQRFHPTTSCVDYYLRIEFKKLFELCKIMKNMKTKMVRLGTYVSQDAYKLLRELTELYGNQSNVLDQAIRLLYDVSKYGSKADRILIREKLINEFENILISKKNFMHLLEGKKEGLFDEDVITAVILSFVDESMDSKSFFPKMMDALKKIYVEGNRWFTNIEYKETESGYKVTFYHNLNSEFSDFASEYFRRFFKIGYKIVEEQKLNKLFILQVSEF.

This is an uncharacterized protein from Archaeoglobus fulgidus (strain ATCC 49558 / DSM 4304 / JCM 9628 / NBRC 100126 / VC-16).